A 439-amino-acid polypeptide reads, in one-letter code: Transcriptional enhancer factor TEF-5 (439 aa).

The span at 1–12 shows a compositional bias: polar residues; sequence MASNSWTANSSP. Positions 1–34 are disordered; the sequence is MASNSWTANSSPGEAREDGSEGLDKGLDNDAEGV. Ala-2 carries the post-translational modification N-acetylalanine. Basic and acidic residues predominate over residues 14 to 28; the sequence is EAREDGSEGLDKGLD. A DNA-binding region (TEA) is located at residues 28-104; that stretch reads DNDAEGVWSP…QVLARKKVRE (77 aa). A Phosphoserine modification is found at Ser-148. Positions 173 to 439 are transcriptional activation; it reads GPSQDIKPFA…QHHVYKLVKD (267 aa).

Interacts with YAP1 and WWTR1/TAZ. In terms of tissue distribution, expressed in embryos as well as in many adult tissues.

The protein resides in the nucleus. Its function is as follows. Transcription factor which plays a key role in the Hippo signaling pathway, a pathway involved in organ size control and tumor suppression by restricting proliferation and promoting apoptosis. The core of this pathway is composed of a kinase cascade wherein MST1/MST2, in complex with its regulatory protein SAV1, phosphorylates and activates LATS1/2 in complex with its regulatory protein MOB1, which in turn phosphorylates and inactivates YAP1 oncoprotein and WWTR1/TAZ. Acts by mediating gene expression of YAP1 and WWTR1/TAZ, thereby regulating cell proliferation, migration and epithelial mesenchymal transition (EMT) induction. This is Transcriptional enhancer factor TEF-5 (Tead3) from Mus musculus (Mouse).